The following is a 367-amino-acid chain: Glutamate 5-kinase (367 aa).

Lys10 contributes to the ATP binding site. Positions 50, 137, and 149 each coordinate substrate. Residues 169-170 (TD) and 211-217 (TGGMGTK) each bind ATP. The region spanning 275 to 353 (AGEITVDEGA…QQIDAILGYE (79 aa)) is the PUA domain.

Belongs to the glutamate 5-kinase family.

It localises to the cytoplasm. The catalysed reaction is L-glutamate + ATP = L-glutamyl 5-phosphate + ADP. It functions in the pathway amino-acid biosynthesis; L-proline biosynthesis; L-glutamate 5-semialdehyde from L-glutamate: step 1/2. Its function is as follows. Catalyzes the transfer of a phosphate group to glutamate to form L-glutamate 5-phosphate. In Citrobacter koseri (strain ATCC BAA-895 / CDC 4225-83 / SGSC4696), this protein is Glutamate 5-kinase.